The chain runs to 239 residues: Protein Thf1 (239 aa).

Residues 183 to 221 are a coiled coil; the sequence is ERVRKDLELYRSSLDRMKQARAVVEEMVKAARRQQERRQ. The span at 211–221 shows a compositional bias: basic and acidic residues; that stretch reads KAARRQQERRQ. The segment at 211 to 239 is disordered; that stretch reads KAARRQQERRQSAASLPETSLGDPSKPGS.

It belongs to the THF1 family.

May be involved in photosynthetic membrane biogenesis. This Synechococcus sp. (strain JA-2-3B'a(2-13)) (Cyanobacteria bacterium Yellowstone B-Prime) protein is Protein Thf1.